Reading from the N-terminus, the 485-residue chain is Probable aspartic-type endopeptidase opsB (485 aa).

The signal sequence occupies residues 1–20 (MRHIFSLLSIVCLMVKHGAC). A Peptidase A1 domain is found at 69 to 397 (YFCNVTLGTP…DIANNEISIA (329 aa)). Residue asparagine 72 is glycosylated (N-linked (GlcNAc...) asparagine). Aspartate 87 is a catalytic residue. N-linked (GlcNAc...) asparagine glycosylation is found at asparagine 99, asparagine 107, asparagine 111, and asparagine 132. Aspartate 285 is an active-site residue. N-linked (GlcNAc...) asparagine glycosylation is found at asparagine 328, asparagine 337, and asparagine 402. The GPI-anchor amidated serine moiety is linked to residue serine 461. A propeptide spans 462-485 (AGVARADKQYLAIALIAVWFVLGL) (removed in mature form).

The protein belongs to the peptidase A1 family.

The protein resides in the cell membrane. Its function is as follows. Probable GPI-anchored aspartic-type endopeptidase which contributes to virulence. The chain is Probable aspartic-type endopeptidase opsB (opsB) from Aspergillus fumigatus (strain ATCC MYA-4609 / CBS 101355 / FGSC A1100 / Af293) (Neosartorya fumigata).